The sequence spans 470 residues: Membrane-bound lytic murein transglycosylase F (470 aa).

The signal sequence occupies residues 1 to 24 (MPSLKTKGAAGKFASLLLVLALSA). Residues 25 to 262 (CSRPAPPPET…RALERYFGHV (238 aa)) are non-LT domain. Positions 263 to 470 (KRLGSSDILG…RGEDGLPPPG (208 aa)) are LT domain. E309 is a catalytic residue.

In the N-terminal section; belongs to the bacterial solute-binding protein 3 family. This sequence in the C-terminal section; belongs to the transglycosylase Slt family.

It is found in the cell outer membrane. The catalysed reaction is Exolytic cleavage of the (1-&gt;4)-beta-glycosidic linkage between N-acetylmuramic acid (MurNAc) and N-acetylglucosamine (GlcNAc) residues in peptidoglycan, from either the reducing or the non-reducing ends of the peptidoglycan chains, with concomitant formation of a 1,6-anhydrobond in the MurNAc residue.. Murein-degrading enzyme that degrades murein glycan strands and insoluble, high-molecular weight murein sacculi, with the concomitant formation of a 1,6-anhydromuramoyl product. Lytic transglycosylases (LTs) play an integral role in the metabolism of the peptidoglycan (PG) sacculus. Their lytic action creates space within the PG sacculus to allow for its expansion as well as for the insertion of various structures such as secretion systems and flagella. In Thiobacillus denitrificans (strain ATCC 25259 / T1), this protein is Membrane-bound lytic murein transglycosylase F.